A 220-amino-acid polypeptide reads, in one-letter code: MTKGILGRKIGMTQVFGENGELIPVTVVEAKENVVLQKKTVEVDGYNAIQVGFEDKKAYKKDAKSNKYANKPAEGHAKKADAAPKRFIREFRNVDVDAYEVGQEVSVDTFVAGDVIDVTGVSKGKGFQGAIKRHGQSRGPMSHSSHFHRAPDSVGMASDASRVFKGQKMPGRMGGNTVTVQNLEVVQVDTENKVILVKGNVPGPKKGLVEIRTSIKKGNK.

Residues 127-155 form a disordered region; it reads FQGAIKRHGQSRGPMSHSSHFHRAPDSVG.

This sequence belongs to the universal ribosomal protein uL3 family. In terms of assembly, part of the 50S ribosomal subunit. Forms a cluster with proteins L14 and L19.

Functionally, one of the primary rRNA binding proteins, it binds directly near the 3'-end of the 23S rRNA, where it nucleates assembly of the 50S subunit. The sequence is that of Large ribosomal subunit protein uL3 from Staphylococcus aureus (strain JH9).